Reading from the N-terminus, the 84-residue chain is Cell division topological specificity factor (84 aa).

This sequence belongs to the MinE family.

Prevents the cell division inhibition by proteins MinC and MinD at internal division sites while permitting inhibition at polar sites. This ensures cell division at the proper site by restricting the formation of a division septum at the midpoint of the long axis of the cell. In Paraburkholderia phytofirmans (strain DSM 17436 / LMG 22146 / PsJN) (Burkholderia phytofirmans), this protein is Cell division topological specificity factor.